The chain runs to 343 residues: Pseudaminic acid synthase (343 aa).

Positions 287 to 343 constitute an AFP-like domain; sequence SLYASKDIKKGEIFSEENVKSVRPSFGLHPKFYQELLGKKASKDIEFGDALKESDFR.

Belongs to the pseudaminic acid synthase family. A divalent metal cation is required as a cofactor.

The catalysed reaction is 2,4-diacetamido-2,4,6-trideoxy-beta-L-altrose + phosphoenolpyruvate + H2O = pseudaminate + phosphate. In terms of biological role, catalyzes the fifth step in the biosynthesis of pseudaminic acid, a sialic-acid-like sugar that is used to modify flagellin. Catalyzes the condensation of phosphoenolpyruvate with 2,4-diacetamido-2,4,6-trideoxy-beta-l-altropyranose, forming pseudaminic acid. In Campylobacter jejuni subsp. jejuni serotype O:23/36 (strain 81-176), this protein is Pseudaminic acid synthase (pseI).